The sequence spans 87 residues: Small ribosomal subunit protein uS15c (87 aa).

This sequence belongs to the universal ribosomal protein uS15 family. Part of the 30S ribosomal subunit.

It localises to the plastid. The protein localises to the chloroplast. The protein is Small ribosomal subunit protein uS15c (rps15) of Solanum lycopersicum (Tomato).